The following is a 520-amino-acid chain: Nonsense-mediated mRNA decay factor SMG9 (520 aa).

Disordered regions lie at residues 1–94 and 107–143; these read MSES…PAPL and GKGPVAATGASTPEGTAPPPPTAPAPPKGEKEGQRPT. At S2 the chain carries N-acetylserine. Residues S2, S4, S7, S32, and S53 each carry the phosphoserine modification. A compositionally biased stretch (basic and acidic residues) spans 36–53; the sequence is GRERDYIAPWERERRDGS. Over residues 78–94 the composition is skewed to pro residues; sequence QPPPSTAPAAPPAPAPL. Positions 112–121 are enriched in low complexity; that stretch reads AATGASTPEG. The segment covering 122 to 133 has biased composition (pro residues); that stretch reads TAPPPPTAPAPP. S451 is modified (phosphoserine).

It belongs to the SMG9 family. Self-associates to form homodimers and forms heterodimers with SMG8; these assembly forms may represent SMG1C intermediate forms. Component of the SMG1C complex composed of SMG1, SMG8 and SMG9. Interacts with DHX34; the interaction is RNA-independent. Phosphorylated by SMG1.

Functionally, involved in nonsense-mediated decay (NMD) of mRNAs containing premature stop codons. Is recruited by release factors to stalled ribosomes together with SMG1 and SMG8 (forming the SMG1C protein kinase complex) and, in the SMG1C complex, is required for the efficient association between SMG1 and SMG8. Plays a role in brain, heart, and eye development. The chain is Nonsense-mediated mRNA decay factor SMG9 from Rattus norvegicus (Rat).